We begin with the raw amino-acid sequence, 389 residues long: NADH-quinone oxidoreductase subunit D (389 aa).

This sequence belongs to the complex I 49 kDa subunit family. In terms of assembly, NDH-1 is composed of 14 different subunits. Subunits NuoB, C, D, E, F, and G constitute the peripheral sector of the complex.

The protein localises to the cell inner membrane. The catalysed reaction is a quinone + NADH + 5 H(+)(in) = a quinol + NAD(+) + 4 H(+)(out). Its function is as follows. NDH-1 shuttles electrons from NADH, via FMN and iron-sulfur (Fe-S) centers, to quinones in the respiratory chain. The immediate electron acceptor for the enzyme in this species is believed to be ubiquinone. Couples the redox reaction to proton translocation (for every two electrons transferred, four hydrogen ions are translocated across the cytoplasmic membrane), and thus conserves the redox energy in a proton gradient. This chain is NADH-quinone oxidoreductase subunit D, found in Rickettsia typhi (strain ATCC VR-144 / Wilmington).